We begin with the raw amino-acid sequence, 185 residues long: Photosystem I assembly protein Ycf4 (185 aa).

2 helical membrane-spanning segments follow: residues 20-40 (GNFF…SVGA) and 57-77 (ILFF…LFIS).

Belongs to the Ycf4 family.

It is found in the plastid. Its subcellular location is the chloroplast thylakoid membrane. In terms of biological role, seems to be required for the assembly of the photosystem I complex. The sequence is that of Photosystem I assembly protein Ycf4 from Lolium perenne (Perennial ryegrass).